Here is a 399-residue protein sequence, read N- to C-terminus: Bombesin receptor subtype-3 (399 aa).

The Extracellular segment spans residues 1 to 41 (MSQRQSQSPNQTLISITNDTETSSSVVSNDTTHKGWTGDNS). Asn10, Asn18, and Asn29 each carry an N-linked (GlcNAc...) asparagine glycan. The helical transmembrane segment at 42–63 (PGIEALCAIYITYAGIISVGIL) threads the bilayer. The Cytoplasmic portion of the chain corresponds to 64 to 82 (GNAILIKVFFKTKSMQTVP). Residues 83-103 (NIFITSLAFGDLLLLLTCVPV) traverse the membrane as a helical segment. Residues 104–121 (DATHYLAEGWLFGKVGCK) lie on the Extracellular side of the membrane. Cys120 and Cys203 are joined by a disulfide. A helical transmembrane segment spans residues 122–143 (VLSFIRLTSVGVSVFTLTILSA). At 144–163 (DRYKAVVKPLERQPPNAILK) the chain is on the cytoplasmic side. Residues 164–184 (TCAKAGGIWIVSMIFALPEAI) traverse the membrane as a helical segment. At 185 to 220 (FSNVYTFQDPNRNVTFESCNSYPISERLLQEIHSLL) the chain is on the extracellular side. Residues 221-241 (CFLVFYIIPLSIISVYYSLIA) traverse the membrane as a helical segment. Topologically, residues 242–272 (RTLYKSTLNIPTEEQSHARKQIESRKRIAKT) are cytoplasmic. Residues 273–293 (VLVLVALFALCWLPNHLLYLY) form a helical membrane-spanning segment. At 294 to 313 (HSFTYESYANHSDVPFVIII) the chain is on the extracellular side. Residues 314–333 (FSRVLAFSNSCVNPFALYWL) form a helical membrane-spanning segment. Topologically, residues 334 to 399 (SKTFQQHFKA…SSAKKGEDKV (66 aa)) are cytoplasmic. Cys347 is lipidated: S-palmitoyl cysteine.

The protein belongs to the G-protein coupled receptor 1 family. In terms of assembly, interacts with C6orf89.

The protein localises to the cell membrane. Role in sperm cell division, maturation, or function. This receptor mediates its action by association with G proteins that activate a phosphatidylinositol-calcium second messenger system. This is Bombesin receptor subtype-3 (Brs3) from Mus musculus (Mouse).